The chain runs to 217 residues: Large ribosomal subunit protein uL3 (217 aa).

The tract at residues 137–160 (VSASHGSHRNHRKPGSIGASSTPS) is disordered.

It belongs to the universal ribosomal protein uL3 family. As to quaternary structure, part of the 50S ribosomal subunit. Forms a cluster with proteins L14 and L19.

In terms of biological role, one of the primary rRNA binding proteins, it binds directly near the 3'-end of the 23S rRNA, where it nucleates assembly of the 50S subunit. The protein is Large ribosomal subunit protein uL3 of Clavibacter michiganensis subsp. michiganensis (strain NCPPB 382).